The sequence spans 84 residues: Exodeoxyribonuclease 7 small subunit (84 aa).

Belongs to the XseB family. Heterooligomer composed of large and small subunits.

It localises to the cytoplasm. The enzyme catalyses Exonucleolytic cleavage in either 5'- to 3'- or 3'- to 5'-direction to yield nucleoside 5'-phosphates.. Functionally, bidirectionally degrades single-stranded DNA into large acid-insoluble oligonucleotides, which are then degraded further into small acid-soluble oligonucleotides. In Janthinobacterium sp. (strain Marseille) (Minibacterium massiliensis), this protein is Exodeoxyribonuclease 7 small subunit.